Here is a 572-residue protein sequence, read N- to C-terminus: Pentatricopeptide repeat-containing protein At5g15010, mitochondrial (572 aa).

Residues 1–57 constitute a mitochondrion transit peptide; sequence MRGIFLIRSRLSIFRAPAVKCLRFSNVLPSLSNNCIVRLYMEPPVACVLPLGLCSMF. PPR repeat units lie at residues 160–194, 196–230, 231–261, 265–300, 301–335, 336–371, 372–406, 412–438, 439–473, and 474–508; these read SVRE…SPSL, NSQT…KLEM, GIDD…NKDK, DAKS…GVKH, DVVS…CIEP, DRKV…GIEP, NVVT…GLFP, HAFM…GCEP, TVET…TVGP, and DLSS…GMRP.

It belongs to the PPR family. P subfamily.

It is found in the mitochondrion. This chain is Pentatricopeptide repeat-containing protein At5g15010, mitochondrial, found in Arabidopsis thaliana (Mouse-ear cress).